Here is a 326-residue protein sequence, read N- to C-terminus: Cyclin-dependent kinase B2-1 (326 aa).

Residues 28–318 (YEKLEKVGEG…AKKAMEHPYF (291 aa)) form the Protein kinase domain. Residues 34-42 (VGEGTYGKV) and K57 contribute to the ATP site. T38 carries the phosphothreonine modification. Residue Y39 is modified to Phosphotyrosine. D159 serves as the catalytic Proton acceptor. T193 carries the post-translational modification Phosphothreonine.

It belongs to the protein kinase superfamily. CMGC Ser/Thr protein kinase family. CDC2/CDKX subfamily. Interacts with CYCB2-1 and CYCB2-2. Binding to CYCB2-1 or CYCB2-2 activates CDK kinase. Expressed in the dividing region of the root apex and the intercalary meristem of internodes.

It localises to the nucleus. The protein resides in the cytoplasm. It is found in the cytoskeleton. The protein localises to the spindle. Its subcellular location is the phragmoplast. The enzyme catalyses L-seryl-[protein] + ATP = O-phospho-L-seryl-[protein] + ADP + H(+). It catalyses the reaction L-threonyl-[protein] + ATP = O-phospho-L-threonyl-[protein] + ADP + H(+). It carries out the reaction [DNA-directed RNA polymerase] + ATP = phospho-[DNA-directed RNA polymerase] + ADP + H(+). Forms a complex with CYCB2-1 or CYCB2-2 that activates CDK kinase in tobacco BY2 cells during G2/M (mitosis) phases. May be involved in the regulation of the cell cycle at the G2/M transition. This Oryza sativa subsp. japonica (Rice) protein is Cyclin-dependent kinase B2-1 (CDKB2-1).